We begin with the raw amino-acid sequence, 179 residues long: Large ribosomal subunit protein uL5 (179 aa).

It belongs to the universal ribosomal protein uL5 family. As to quaternary structure, part of the 50S ribosomal subunit; part of the 5S rRNA/L5/L18/L25 subcomplex. Contacts the 5S rRNA and the P site tRNA. Forms a bridge to the 30S subunit in the 70S ribosome.

Functionally, this is one of the proteins that bind and probably mediate the attachment of the 5S RNA into the large ribosomal subunit, where it forms part of the central protuberance. In the 70S ribosome it contacts protein S13 of the 30S subunit (bridge B1b), connecting the 2 subunits; this bridge is implicated in subunit movement. Contacts the P site tRNA; the 5S rRNA and some of its associated proteins might help stabilize positioning of ribosome-bound tRNAs. The protein is Large ribosomal subunit protein uL5 of Acidovorax ebreus (strain TPSY) (Diaphorobacter sp. (strain TPSY)).